The following is a 78-amino-acid chain: uncharacterized protein (78 aa).

Basic and acidic residues predominate over residues 56–66 (ERANAGKRVSE). The segment at 56 to 78 (ERANAGKRVSEEEQINGKRKRKD) is disordered.

This is an uncharacterized protein from Saccharomyces cerevisiae (strain ATCC 204508 / S288c) (Baker's yeast).